The chain runs to 181 residues: Oligoribonuclease (181 aa).

Positions L8–L171 constitute an Exonuclease domain. Residue Y129 is part of the active site.

Belongs to the oligoribonuclease family.

Its subcellular location is the cytoplasm. In terms of biological role, 3'-to-5' exoribonuclease specific for small oligoribonucleotides. This is Oligoribonuclease from Vibrio parahaemolyticus serotype O3:K6 (strain RIMD 2210633).